The following is a 464-amino-acid chain: NADH-ubiquinone oxidoreductase chain 4 (464 aa).

13 consecutive transmembrane segments (helical) span residues 1–21 (MMIT…VIPQ), 63–83 (SISA…LIAS), 98–118 (FIII…ALEL), 119–139 (LLFY…ITRW), 152–172 (FMFY…AIYI), 197–217 (IWWA…GFHL), 227–247 (PVAG…YGLI), 261–281 (LSLA…IICV), 288–308 (ALIA…IFSS), 314–334 (NGAL…FSLA), 355–375 (ILPL…GLPP), 389–409 (LIAW…FGAI), and 443–463 (LHTL…ITWL).

It belongs to the complex I subunit 4 family.

It localises to the mitochondrion membrane. The enzyme catalyses a ubiquinone + NADH + 5 H(+)(in) = a ubiquinol + NAD(+) + 4 H(+)(out). Its function is as follows. Core subunit of the mitochondrial membrane respiratory chain NADH dehydrogenase (Complex I) that is believed to belong to the minimal assembly required for catalysis. Complex I functions in the transfer of electrons from NADH to the respiratory chain. The immediate electron acceptor for the enzyme is believed to be ubiquinone. This Paracentrotus lividus (Common sea urchin) protein is NADH-ubiquinone oxidoreductase chain 4 (ND4).